A 388-amino-acid polypeptide reads, in one-letter code: Na(+)/H(+) antiporter NhaA (388 aa).

11 consecutive transmembrane segments (helical) span residues 14–34 (GGII…SGFT), 59–79 (MLLW…GLEV), 95–115 (AFPV…YLAF), 125–145 (GWAI…ALLG), 154–174 (IFLM…IALF), 179–199 (LSMV…VLNL), 219–239 (VLKS…FIPL), 254–274 (VLHP…NAGV), 287–307 (ILPL…ISLF), 328–348 (IMAV…IASL), and 356–376 (ALIN…AVIG).

The protein belongs to the NhaA Na(+)/H(+) (TC 2.A.33) antiporter family.

It is found in the cell inner membrane. It carries out the reaction Na(+)(in) + 2 H(+)(out) = Na(+)(out) + 2 H(+)(in). Na(+)/H(+) antiporter that extrudes sodium in exchange for external protons. In Citrobacter koseri (strain ATCC BAA-895 / CDC 4225-83 / SGSC4696), this protein is Na(+)/H(+) antiporter NhaA.